A 508-amino-acid polypeptide reads, in one-letter code: N-acetyl-D-hexosamine oxidase (508 aa).

The 178-residue stretch at 26–203 (TDAQAAGRIA…TAYTFARLPE (178 aa)) folds into the FAD-binding PCMH-type domain. The 6-(S-cysteinyl)-8alpha-(pros-histidyl)-FAD (His-Cys) cross-link spans 64–123 (HCYEDFVSNNPDGAIVDLSLLNAPEVRADGTVRIPAGTQNWNGYLELYKRHNLTLPGGSC).

This sequence belongs to the oxygen-dependent FAD-linked oxidoreductase family. Requires FAD as cofactor.

It catalyses the reaction N-acetyl-D-glucosamine + O2 + H2O = N-acetyl-D-glucosaminate + H2O2 + H(+). It carries out the reaction N-acetyl-D-galactosamine + O2 + H2O = N-acetyl-D-galactosaminate + H2O2 + H(+). The enzyme catalyses N-acetyl-D-glucosamine + O2 = N-acetyl-D-glucosamino-1,5-lactone + H2O2. The catalysed reaction is N-acetyl-D-galactosamine + O2 = N-acetyl-D-galactosamino-1,5-lactone + H2O2. Functionally, catalyzes the oxidation of a range of monosaccharides in vitro, displaying the highest activity with N-acetylglucosamine (GlcNAc) and N-acetylgalactosamine (GalNAc), with a reduction of O2 to H2O2. Acts upon the C1 carbon of the GlcNAc or GalNAc molecule, producing the corresponding lactone, which can spontaneously hydrolyze. Its biological function is unclear, but its main function might be connected to extracellular production of hydrogen peroxide to compete with other organisms through oxidative stress, or support the action of peroxidases and peroxygenases. The protein is N-acetyl-D-hexosamine oxidase of Ralstonia solanacearum (strain UW551).